The sequence spans 165 residues: Immunity protein YokJ (165 aa).

As to quaternary structure, probably interacts with cognate toxin YokI but not with other non-cognate toxins. The interaction inhibits the toxic activity of YokI.

The protein localises to the cytoplasm. Its function is as follows. Immunity component of one of 6 LXG toxin-immunity modules in this strain. They promote kin selection, mediate competition in biofilms, and drive spatial segregation of different strains, indicating that LXG toxins may help avoid warfare between strains in biofilms. Mediates intercellular competition during biofilm formation; disruption of the operon disadvantages the bacteria, but overexpression of the cognate immunity protein restores growth in competition with wild-type. In situ neutralizes the toxic effect of cognate toxin YokI. Neutralizes the ability to inhibit growth of cognate toxin YokI upon expression in E.coli. Does not have immunity protein activity on other LXG toxins. The sequence is that of Immunity protein YokJ (yokJ) from Bacillus subtilis (strain 168).